Reading from the N-terminus, the 287-residue chain is 4-hydroxybenzoate octaprenyltransferase (287 aa).

7 helical membrane passes run Ala-30–Gly-50, Ile-92–Leu-112, Phe-133–Phe-153, Asp-158–Tyr-178, Val-207–Ala-227, Trp-232–Ile-252, and His-266–Val-286.

It belongs to the UbiA prenyltransferase family. The cofactor is Mg(2+).

It localises to the cell inner membrane. The catalysed reaction is all-trans-octaprenyl diphosphate + 4-hydroxybenzoate = 4-hydroxy-3-(all-trans-octaprenyl)benzoate + diphosphate. It functions in the pathway cofactor biosynthesis; ubiquinone biosynthesis. Functionally, catalyzes the prenylation of para-hydroxybenzoate (PHB) with an all-trans polyprenyl group. Mediates the second step in the final reaction sequence of ubiquinone-8 (UQ-8) biosynthesis, which is the condensation of the polyisoprenoid side chain with PHB, generating the first membrane-bound Q intermediate 3-octaprenyl-4-hydroxybenzoate. In Burkholderia pseudomallei (strain 1106a), this protein is 4-hydroxybenzoate octaprenyltransferase.